Reading from the N-terminus, the 1431-residue chain is MAFRKENKIKSNFSKITIGLASPEEILENSSGEVLKPETINYRTYKPERDGLFCERIFGPIKDYECHCGKYKRIRYKGIVCDRCGVEVTEKKVRRERMGHIHLVVPVAHIWYFRSLPNKIGYLLGLPTKKLDSIIYYERYVVIQPGCVDTVGELDLLSEEEYLDILDSLPRENQLLEDTDPNKFIAKIGAEAVYDLLARLDLDSLSYELRHRANTDTSQQRKNEALKRLQVVESFRASRGRNKPEWMIMKVIPVIPPELRPLVPLDGGRFATSDLNDLYRRVIIRNNRLKRLIDIKAPEVILRNEKRMLQEAVDSLFDNSRKSSAVKTDANRPLKSLSDSLKGKQGRFRQNLLGKRVDYSARSVIVVGPELKMHECGLPKNMAAELYKPFVIRKLIECGIVKTVKSAKKIVDRKEPVVWDILEYVMKGHPVLLNRAPTLHRLGIQAFQPKLIEGKAIQLHPLACTAFNADFDGDQMAVHLPLGNEAVLEAQMLMLASHNILNPANGAPITVPSQDMVLGLYYITKLRKGTQGEGLTFYGPEEATIAYNEKKLDIHAPIHVYVEDLDENGNLVKTMVETSVGRLMVNEFVPKEIGYVNEVLGKKSLRDIIGRVIKACGVARTAQFLDDIKNLGYYMAFKGGLSFNLADVLIPPEKDELVQKGYDEVEQIMANYNMGFITNNERYNQIIDTWTHVNSNLSNILIKQLTADNDGFNSIYMMMDSGARGSKEQIRQLSGMRGLMAKPQKSGAEGGQIIENPILSNFKEGLSVLEYFISTHGARKGLADTALKTADAGYLTRRLVDVSHDVIVNEEDCGTLRGLVCTELKNNEEVIASLYERILGRVSVHDVIHPITGEVIVRSGEEIREDAAKAIQDSPIESVEIRSVLTCESKKGVCAKCYGRNLATNRMVQKGEVVGVIAAQSIGEPGTQLTLRTFHVGGIASNIATENSITSKYDGILEIDELRAVEAVDEVSGKKHLVVVSRLAEMRIVDPNTKIVLLTHNIPYGSKLFFNNGDSIKKGDVIIEWDPFNAVIVSEVSGKIEFESLVENVTYKVESDETTGLKEKIIIESKDKTKAPAAHIVDENGNYLKNYSLPLGAHVVKDNGDVVKAGEVLVKIPRAVGKAGDITGGLPRVTELFEARNPSNPAVVSEIDGEVGFGKIKRGNREITVTSKLGEVKKYMVPLSKQLLVQENDYIRAGMPLSDGATTPSDILAIKGPTAVQEYIVNEVQDVYRLQGVKINDKHFEVIVRQMMRKVEVVDPGDTRFLEQQIVDKLEVMDENDRIWGKKVVTDPGDSQTLQAGQIVTARKLRDENSMLKRRDLKLVEVRDAIPATANQILQGITRAALQTNSFMSAASFQETTKVLNEAAINGKVDRLEGLKENVICGHLIPAGTGQREFDKLIVGAKDEFDRIFANRKNVVDFNAMDKDDEE.

Cys66, Cys68, Cys81, and Cys84 together coordinate Zn(2+). The Mg(2+) site is built by Asp470, Asp472, and Asp474. Residues Cys813, Cys887, Cys894, and Cys897 each coordinate Zn(2+).

It belongs to the RNA polymerase beta' chain family. As to quaternary structure, the RNAP catalytic core consists of 2 alpha, 1 beta, 1 beta' and 1 omega subunit. When a sigma factor is associated with the core the holoenzyme is formed, which can initiate transcription. Requires Mg(2+) as cofactor. The cofactor is Zn(2+).

The enzyme catalyses RNA(n) + a ribonucleoside 5'-triphosphate = RNA(n+1) + diphosphate. In terms of biological role, DNA-dependent RNA polymerase catalyzes the transcription of DNA into RNA using the four ribonucleoside triphosphates as substrates. This chain is DNA-directed RNA polymerase subunit beta', found in Parabacteroides distasonis (strain ATCC 8503 / DSM 20701 / CIP 104284 / JCM 5825 / NCTC 11152).